The following is a 104-amino-acid chain: Large ribosomal subunit protein uL24 (104 aa).

This sequence belongs to the universal ribosomal protein uL24 family. As to quaternary structure, part of the 50S ribosomal subunit.

One of two assembly initiator proteins, it binds directly to the 5'-end of the 23S rRNA, where it nucleates assembly of the 50S subunit. In terms of biological role, one of the proteins that surrounds the polypeptide exit tunnel on the outside of the subunit. This is Large ribosomal subunit protein uL24 from Pseudomonas entomophila (strain L48).